Here is a 129-residue protein sequence, read N- to C-terminus: Thylakoid-associated single-stranded DNA-binding protein slr1034 (129 aa).

An SSB domain is found at 1 to 100; it reads MNSFVLMATV…LTASRISLVD (100 aa). Positions 99 to 129 are disordered; it reads VDSGNGINPGELSSPPEPEAVDLSNTDDIPF.

As to quaternary structure, homotetramer.

The protein resides in the cellular thylakoid membrane. This is Thylakoid-associated single-stranded DNA-binding protein slr1034 from Synechocystis sp. (strain ATCC 27184 / PCC 6803 / Kazusa).